The following is a 572-amino-acid chain: Urease subunit alpha (572 aa).

One can recognise a Urease domain in the interval 136–572; it reads GGIDTHIHFI…VPLGQRYFLF (437 aa). Ni(2+) is bound by residues H141, H143, and K224. Position 224 is an N6-carboxylysine (K224). H226 is a binding site for substrate. Ni(2+) is bound by residues H253 and H279. The active-site Proton donor is H327. Residue D367 participates in Ni(2+) binding.

The protein belongs to the metallo-dependent hydrolases superfamily. Urease alpha subunit family. In terms of assembly, heterotrimer of UreA (gamma), UreB (beta) and UreC (alpha) subunits. Three heterotrimers associate to form the active enzyme. Requires Ni cation as cofactor. Carboxylation allows a single lysine to coordinate two nickel ions.

The protein localises to the cytoplasm. The enzyme catalyses urea + 2 H2O + H(+) = hydrogencarbonate + 2 NH4(+). It functions in the pathway nitrogen metabolism; urea degradation; CO(2) and NH(3) from urea (urease route): step 1/1. The polypeptide is Urease subunit alpha (Haemophilus influenzae (strain PittGG)).